The sequence spans 634 residues: Probable beta-glucosidase C (634 aa).

The N-terminal stretch at Met-1–Ala-19 is a signal peptide. N-linked (GlcNAc...) asparagine glycosylation is found at Asn-90, Asn-112, Asn-219, and Asn-270. Asp-337 is an active-site residue. N-linked (GlcNAc...) asparagine glycosylation is found at Asn-360, Asn-476, Asn-484, and Asn-524.

The protein belongs to the glycosyl hydrolase 3 family.

The protein localises to the secreted. The catalysed reaction is Hydrolysis of terminal, non-reducing beta-D-glucosyl residues with release of beta-D-glucose.. Its pathway is glycan metabolism; cellulose degradation. In terms of biological role, beta-glucosidases are one of a number of cellulolytic enzymes involved in the degradation of cellulosic biomass. Catalyzes the last step releasing glucose from the inhibitory cellobiose. In Aspergillus flavus (strain ATCC 200026 / FGSC A1120 / IAM 13836 / NRRL 3357 / JCM 12722 / SRRC 167), this protein is Probable beta-glucosidase C (bglC).